The chain runs to 397 residues: Phosphoglycerate kinase (397 aa).

Substrate contacts are provided by residues 21 to 23 (DVN), arginine 36, 59 to 62 (HFGR), arginine 119, and arginine 152. Residues lysine 202, glutamate 324, and 354–357 (GGDT) each bind ATP.

This sequence belongs to the phosphoglycerate kinase family. In terms of assembly, monomer.

The protein localises to the cytoplasm. The catalysed reaction is (2R)-3-phosphoglycerate + ATP = (2R)-3-phospho-glyceroyl phosphate + ADP. Its pathway is carbohydrate degradation; glycolysis; pyruvate from D-glyceraldehyde 3-phosphate: step 2/5. This chain is Phosphoglycerate kinase, found in Cereibacter sphaeroides (strain KD131 / KCTC 12085) (Rhodobacter sphaeroides).